The sequence spans 193 residues: Acyl carrier protein phosphodiesterase (193 aa).

It belongs to the AcpH family.

The catalysed reaction is holo-[ACP] + H2O = apo-[ACP] + (R)-4'-phosphopantetheine + H(+). In terms of biological role, converts holo-ACP to apo-ACP by hydrolytic cleavage of the phosphopantetheine prosthetic group from ACP. The protein is Acyl carrier protein phosphodiesterase of Klebsiella pneumoniae subsp. pneumoniae (strain ATCC 700721 / MGH 78578).